Consider the following 389-residue polypeptide: MEKKNITLTILLTNLFIAFLGIGLVIPVTPTIMNELHLSGTAVGYMVACFAITQLIVSPIAGRWVDRFGRKIMIVIGLLFFSVSEFLFGIGKTVEMLFISRMLGGISAAFIMPGVTAFIADITTIKTRPKALGYMSAAISTGFIIGPGIGGFLAEVHSRLPFFFAAAFALLAAILSILTLREPERNPENQEIKGQKTGFKRIFAPMYFIAFLIILISSFGLASFESLFALFVDHKFGFTASDIAIMITGGAIVGAITQVVLFDRFTRWFGEIHLIRYSLILSTSLVFLLTTVHSYVAILLVTVTVFVGFDLMRPAVTTYLSKIAGNEQGFAGGMNSMFTSIGNVFGPIIGGMLFDIDVNYPFYFATVTLAIGIALTIAWKAPAHLKAST.

A run of 11 helical transmembrane segments spans residues 6–26, 42–62, 71–91, 102–122, 134–154, 160–180, 202–222, 243–263, 286–306, 336–356, and 358–378; these read ITLT…GLVI, AVGY…PIAG, KIMI…FGIG, MLGG…IADI, YMSA…GFLA, LPFF…ILTL, IFAP…FGLA, IAIM…VLFD, VFLL…VTVF, SMFT…LFDI, and VNYP…LTIA.

Belongs to the major facilitator superfamily. TCR/Tet family.

It is found in the cell membrane. Energy-dependent efflux pump responsible for decreased drug accumulation in multi-drug-resistant cells. Probably uses a transmembrane proton gradient as the energy source. Causes the efflux of a variety of toxic substances, including such structurally diverse compounds as ethidium bromide, rhodamine and acridine dyes, tetraphenylphosphonium, puromycin, chloramphenicol, doxorubicin, and fluoroquinolone antibiotics. The sequence is that of Multidrug resistance protein 1 (bmr) from Bacillus subtilis (strain 168).